A 410-amino-acid polypeptide reads, in one-letter code: MIRYFTAGESHGPALSAIVEGMPAGVALTESDINDQLARRQQGYGRGGRMKIETDRAEVLSGIRFGKTIGSPVAMVIRNRDWENWTVPMAQFDDNSAEVQKITIPRPGHADLTGFVKYGFDDIRPVIDRSSARETAARVAAGSLARAFLRQLGIQIGSYISTIGPVSEASAPAALPELLDAGAESLAAEADKSPVRMIDPATSEAAIAAIDQAKADGDTLGGIVEVYITGVPMGLGSYVQHDRRLDSALAAAIMSIQAIKGVEIGPAFDNARKPGSEVHDELFAGGEKGLRRKTNRAGGIEGSMSSGQPIHIRAAMKPISSLVSPLRSFDLATLEAVQSRFERSDTCAVPAAGIVAEAVVAPSSPTPCWKSSAEIIWRRLRKGWRLIGKRYEYALQGKKLRREPEVFAID.

2 residues coordinate NADP(+): Arg-40 and Arg-46. FMN contacts are provided by residues 129-131 (RSS), 257-258 (QA), Gly-302, 317-321 (KPISS), and Arg-343.

This sequence belongs to the chorismate synthase family. In terms of assembly, homotetramer. FMNH2 is required as a cofactor.

The catalysed reaction is 5-O-(1-carboxyvinyl)-3-phosphoshikimate = chorismate + phosphate. It participates in metabolic intermediate biosynthesis; chorismate biosynthesis; chorismate from D-erythrose 4-phosphate and phosphoenolpyruvate: step 7/7. Its function is as follows. Catalyzes the anti-1,4-elimination of the C-3 phosphate and the C-6 proR hydrogen from 5-enolpyruvylshikimate-3-phosphate (EPSP) to yield chorismate, which is the branch point compound that serves as the starting substrate for the three terminal pathways of aromatic amino acid biosynthesis. This reaction introduces a second double bond into the aromatic ring system. The polypeptide is Chorismate synthase (Chlorobaculum parvum (strain DSM 263 / NCIMB 8327) (Chlorobium vibrioforme subsp. thiosulfatophilum)).